The following is a 295-amino-acid chain: Oxidoreductase AN1597 (295 aa).

It belongs to the asaB hydroxylase/desaturase family.

It participates in secondary metabolite biosynthesis; terpenoid biosynthesis. Functionally, oxidoreductase; part of the gene cluster that mediates the biosynthesis of the diterpene ent-pimara-8(14),15-diene (PD). Within the cluster, the HMG-CoA reductase AN1593 functions in the mevalonate pathway, which produces isoprenoid precursors. The geranylgeranyl pyrophosphate (GGPP) synthase AN1592 is needed in the formation of GGPP, the precursor for diterpenes. Lastly, the pimaradiene synthase pbcA performs the 2 cyclization steps that convert GGPP to ent-pimara-8(14),15-diene. The putative roles of the remaining cluster enzymes in ent-pimara-8(14),15-diene biosynthesis is unclear. The cytochrome P450 monooxygenase AN1598, the glutathione S-transferase AN1595, the oxidoreductases AN1596 and AN1597 probably function as decorative enzymes. It is possible that in biological conditions the compound is oxidized to ent-pimara-8(14),15-dien-19-oic acid, which is a bioactive diterpene compound predominant in many plant extracts. The chain is Oxidoreductase AN1597 from Emericella nidulans (strain FGSC A4 / ATCC 38163 / CBS 112.46 / NRRL 194 / M139) (Aspergillus nidulans).